The chain runs to 95 residues: Small ribosomal subunit protein uS15 (95 aa).

The protein belongs to the universal ribosomal protein uS15 family. As to quaternary structure, part of the 30S ribosomal subunit. Forms a bridge to the 50S subunit in the 70S ribosome, contacting the 23S rRNA.

One of the primary rRNA binding proteins, it binds directly to 16S rRNA where it helps nucleate assembly of the platform of the 30S subunit by binding and bridging several RNA helices of the 16S rRNA. In terms of biological role, forms an intersubunit bridge (bridge B4) with the 23S rRNA of the 50S subunit in the ribosome. The polypeptide is Small ribosomal subunit protein uS15 (Streptomyces avermitilis (strain ATCC 31267 / DSM 46492 / JCM 5070 / NBRC 14893 / NCIMB 12804 / NRRL 8165 / MA-4680)).